A 318-amino-acid polypeptide reads, in one-letter code: tRNA dimethylallyltransferase (318 aa).

16-23 serves as a coordination point for ATP; that stretch reads GPTASGKT. 18–23 is a binding site for substrate; it reads TASGKT. Interaction with substrate tRNA stretches follow at residues 41 to 44, 165 to 169, 246 to 251, and 279 to 286; these read DSAL, QRINR, RCVGYR, and KRQITWLR.

This sequence belongs to the IPP transferase family. As to quaternary structure, monomer. It depends on Mg(2+) as a cofactor.

It catalyses the reaction adenosine(37) in tRNA + dimethylallyl diphosphate = N(6)-dimethylallyladenosine(37) in tRNA + diphosphate. Its function is as follows. Catalyzes the transfer of a dimethylallyl group onto the adenine at position 37 in tRNAs that read codons beginning with uridine, leading to the formation of N6-(dimethylallyl)adenosine (i(6)A). The sequence is that of tRNA dimethylallyltransferase from Actinobacillus succinogenes (strain ATCC 55618 / DSM 22257 / CCUG 43843 / 130Z).